Here is a 291-residue protein sequence, read N- to C-terminus: Lys-63-specific deubiquitinase BRCC36-like (291 aa).

The region spanning 12-179 (VYLESDAFLV…YTCFQSVQAS (168 aa)) is the MPN domain. Zn(2+)-binding residues include His-122, His-124, and Asp-135. The JAMM motif signature appears at 122–135 (HSHPHITVWPSHVD). Positions 259–286 (LQWLEDRLEQNQQRLQELEQEKEDLMEE) form a coiled coil.

The protein belongs to the peptidase M67A family. BRCC36 subfamily.

In terms of biological role, metalloprotease that specifically cleaves 'Lys-63'-linked polyubiquitin chains. The sequence is that of Lys-63-specific deubiquitinase BRCC36-like from Mus musculus (Mouse).